The chain runs to 674 residues: Sodium/myo-inositol cotransporter 2 (674 aa).

The Extracellular portion of the chain corresponds to 1 to 27 (MESSPSSPQPTQSDPLAVFPQRTLEPA). Residues 28–48 (DIAVLVLYFLFVLAVGLWSTV) form a helical membrane-spanning segment. The Cytoplasmic segment spans residues 49 to 56 (KTRRDTVK). Residues 57 to 77 (GYFLAGGDMVWWPVGASLFAS) form a helical membrane-spanning segment. The Extracellular segment spans residues 78–102 (NVGSGHFVGLAGSGAAAGLSVTAYE). Residues 103 to 123 (FNGIFSVLMLAWIFLPIYIAG) traverse the membrane as a helical segment. At 124-140 (QVTTMPEYLRKRFGGSR) the chain is on the cytoplasmic side. Residues 141-161 (IPITLAVLYLFIYIFTKISVD) traverse the membrane as a helical segment. The Extracellular portion of the chain corresponds to 162 to 180 (MYAGAIFIQQSLHLNLYLA). Residues 181 to 201 (IVGLLAITALYTIAGGLAAVI) form a helical membrane-spanning segment. The Cytoplasmic portion of the chain corresponds to 202–208 (YTDALQT). Residues 209–229 (LIMLIGALTLMGYSFAAVGGM) form a helical membrane-spanning segment. The Extracellular segment spans residues 230–272 (EGLKEKYFLALASNRSGNSSCGLPREDAFHIFRDPLTSDLPWP). The helical transmembrane segment at 273-293 (GILFGMSIPSLWYWCTDQVIV) threads the bilayer. Residues 294-308 (QRTLAAKNLSHAKGG) lie on the Cytoplasmic side of the membrane. A helical transmembrane segment spans residues 309–329 (SLMAAYLKVLPLFIMVFPGMV). The Extracellular portion of the chain corresponds to 330–374 (SRVLFPDQVACADPEICQKVCSNPAGCSDIAYPKLVLELLPMGLR). Residues 375–397 (GLMMAVMVAALMSSLTSIFNSAS) form a helical membrane-spanning segment. Topologically, residues 398–418 (TIFTMDLWNHLRPRASERELM) are cytoplasmic. A helical transmembrane segment spans residues 419–439 (IVGRVFVLLLVLVSILWIPVV). Topologically, residues 440 to 446 (QASQGGQ) are extracellular. The chain crosses the membrane as a helical span at residues 447–467 (LFIYIQSISSYLQPPVAVVFI). Over 468-479 (MGCFWKRTNEKG) the chain is Cytoplasmic. Residues 480 to 500 (AFSGLILGLLLGLVRLVLDFI) traverse the membrane as a helical segment. The Extracellular segment spans residues 501–518 (YPQPRCDQPDERPAVVRD). Residues 519-539 (VHYLYFSMILSSVTLVTVSTV) form a helical membrane-spanning segment. Over 540 to 653 (SWCTAPPTQE…SLEEIPLVKT (114 aa)) the chain is Cytoplasmic. A helical membrane pass occupies residues 654–674 (LLDINLIVCISCAIFLWGYFA).

The protein belongs to the sodium:solute symporter (SSF) (TC 2.A.21) family.

It localises to the membrane. The protein resides in the apical cell membrane. It catalyses the reaction myo-inositol(out) + 2 Na(+)(out) = myo-inositol(in) + 2 Na(+)(in). The catalysed reaction is 1D-chiro-inositol(out) + 2 Na(+)(out) = 1D-chiro-inositol(in) + 2 Na(+)(in). The enzyme catalyses D-glucose(out) + 2 Na(+)(out) = D-glucose(in) + 2 Na(+)(in). It carries out the reaction D-xylose(out) + 2 Na(+)(out) = D-xylose(in) + 2 Na(+)(in). MI transport activity inhibited by D-chiro-inositol (DCI), phlorizin (Pz) and sodium (Na(+)). Insulin increases D-chiro-inositol uptake. In terms of biological role, involved in the sodium-dependent cotransport of myo-inositol (MI) with a Na(+):MI stoichiometry of 2:1. Exclusively responsible for apical MI transport and absorption in intestine. Can also transport D-chiro-inositol (DCI) but not L-fucose. Exhibits stereospecific cotransport of both D-glucose and D-xylose. May induce apoptosis through the TNF-alpha, PDCD1 pathway. May play a role in the regulation of MI concentration in serum, involving reabsorption in at least the proximal tubule of the kidney. This is Sodium/myo-inositol cotransporter 2 from Sus scrofa (Pig).